The chain runs to 224 residues: uncharacterized protein (224 aa).

The interval 128-224 (VPSVQLHQIP…TNKRKKRLQF (97 aa)) is disordered. Residues 129 to 138 (PSVQLHQIPT) show a composition bias toward polar residues. A compositionally biased stretch (basic residues) spans 139–156 (RSRRSSKPRKPRKKRKER). Residues 167 to 182 (LLREMDRLMTKQRDAL) are compositionally biased toward basic and acidic residues. The span at 185–195 (SESSSYFSSDS) shows a compositional bias: low complexity.

This is an uncharacterized protein from Torque teno sus virus 1 (isolate Sd-TTV31).